Reading from the N-terminus, the 234-residue chain is MMRWLGYVIGCFAAGVVALNLYFFAAIASWQVFNPASSAFMRAERMRLCGANLVTCGIDHRWVPYDQISRNLKRAVIASEDADFVSHSGWEVDAMLDAWEKNKRRGHVVAGGSTITQQLAKNLFLSGERHYLRKGEELVITWMLEFWLDKERILEIYLNSVEWGEGVFGAEAAAQHYFKRPASQLTVGQAARLAAALPAPKCFDKKRYCANVHISFTRKATVIANRMGSATLPD.

Residues 8–28 (VIGCFAAGVVALNLYFFAAIA) form a helical membrane-spanning segment.

The protein belongs to the glycosyltransferase 51 family.

Its subcellular location is the cell inner membrane. The enzyme catalyses [GlcNAc-(1-&gt;4)-Mur2Ac(oyl-L-Ala-gamma-D-Glu-L-Lys-D-Ala-D-Ala)](n)-di-trans,octa-cis-undecaprenyl diphosphate + beta-D-GlcNAc-(1-&gt;4)-Mur2Ac(oyl-L-Ala-gamma-D-Glu-L-Lys-D-Ala-D-Ala)-di-trans,octa-cis-undecaprenyl diphosphate = [GlcNAc-(1-&gt;4)-Mur2Ac(oyl-L-Ala-gamma-D-Glu-L-Lys-D-Ala-D-Ala)](n+1)-di-trans,octa-cis-undecaprenyl diphosphate + di-trans,octa-cis-undecaprenyl diphosphate + H(+). It participates in cell wall biogenesis; peptidoglycan biosynthesis. Its function is as follows. Peptidoglycan polymerase that catalyzes glycan chain elongation from lipid-linked precursors. This Ralstonia nicotianae (strain ATCC BAA-1114 / GMI1000) (Ralstonia solanacearum) protein is Biosynthetic peptidoglycan transglycosylase.